We begin with the raw amino-acid sequence, 122 residues long: MARIAGVNIPTNKRVLIALQYIHGIGPKIASEIIEKVKIAEDRRVNQLSDQEVLQIREIIDRDYVVEGDLRRETGINIKRLMDLGCYRGLRHRRGLPVRGQRTHTNARTRKGPAKAIAGKKK.

The interval 99-122 (RGQRTHTNARTRKGPAKAIAGKKK) is disordered.

The protein belongs to the universal ribosomal protein uS13 family. In terms of assembly, part of the 30S ribosomal subunit. Forms a loose heterodimer with protein S19. Forms two bridges to the 50S subunit in the 70S ribosome.

In terms of biological role, located at the top of the head of the 30S subunit, it contacts several helices of the 16S rRNA. In the 70S ribosome it contacts the 23S rRNA (bridge B1a) and protein L5 of the 50S subunit (bridge B1b), connecting the 2 subunits; these bridges are implicated in subunit movement. Contacts the tRNAs in the A and P-sites. The sequence is that of Small ribosomal subunit protein uS13 from Bradyrhizobium sp. (strain BTAi1 / ATCC BAA-1182).